A 374-amino-acid chain; its full sequence is AA14 family lytic polysaccharide monooxygenase B (374 aa).

The N-terminal stretch at 1–18 (MIPVFLAAIAVFLPLTSG) is a signal peptide. N-linked (GlcNAc...) asparagine glycosylation is found at Asn31, Asn49, Asn94, and Asn151. 5 disulfides stabilise this stretch: Cys85/Cys108, Cys127/Cys154, Cys171/Cys176, Cys178/Cys200, and Cys220/Cys236. N-linked (GlcNAc...) asparagine glycosylation is found at Asn235 and Asn315. Residues 306-374 (ISNATPAPSN…TQSRKMRYVF (69 aa)) form a disordered region. The span at 313 to 344 (PSNGSCSSRPPSSPVSSSAASTTTSRSPRPSA) shows a compositional bias: low complexity.

This sequence belongs to the polysaccharide monooxygenase AA14 family. Requires Cu(2+) as cofactor.

The protein localises to the secreted. Its function is as follows. Lytic polysaccharide monooxygenase (LPMO) that oxidatively cleaves xylan with both C1 and C4 regioselectivity and that specifically targets the protective shield made by heteroxylans that cover cellulose microfibrils in wood. Catalysis by LPMOs requires the reduction of the active-site copper from Cu(II) to Cu(I) by a reducing agent and H(2)O(2) or O(2) as a cosubstrate. Cleavage occurs only when xylans are bound to cellulose and not when they are in solution. Increases the efficiency of wood saccharification through oxidative cleavage of highly refractory xylan-coated cellulose fibers via synergistic relationship with xylan-active enzymes, xylobiohydrolases and cellobiohydrolases. The sequence is that of AA14 family lytic polysaccharide monooxygenase B from Pycnoporus cinnabarinus (Cinnabar-red polypore).